The following is a 508-amino-acid chain: MEEYQVYLELNRSRHQDFLYPLIFREYIYGLTYGHDLNRSIFIENVGYDNKSSLLIVKRLITRMYQQSQLIISTNDSNKNLFWGYNNNIYSQIISEGFVVVVEIPFSLQFSSSLEGAEIVKFYKNLRSIHSIFPFFEDKLIYFNYESDIRIPYPIHLEILVQILRYWMKDVSFFHLLRFFFFYYCNWNSLITPKKLISTFSKSNPRFFLFLYNLYVWEHESIFLFLRNKSSHLRLESFCVFFERIFFYAKIEHLVQVIAKDFSYTLSFFKDPFIHYVRYQEKSILVSRNTPLLMNKWKYYFIHLWQCHFDVWSQPGTIHINQLSEHSFHFLDYFLNLQLNLSVVRSQMLQNSFLMEIVMKKLDTRVPIILLIRSLVKAKFCNVLGHPLSKSVWADLSDFDIIDRFLRICRNFSHYYNGSSKKKNLYRIKYILRLSCIKTLARKHKSTVRAFLKRLDSEKLLEEFFTEEEDIFSLIFPRTSSTLQRLYRGRIWYLDILFSHDPDLVNHS.

The protein belongs to the intron maturase 2 family. MatK subfamily.

The protein resides in the plastid. It localises to the chloroplast. Its function is as follows. Usually encoded in the trnK tRNA gene intron. Probably assists in splicing its own and other chloroplast group II introns. This is Maturase K from Abrus precatorius (Indian licorice).